Consider the following 417-residue polypeptide: Serine hydroxymethyltransferase (417 aa).

(6S)-5,6,7,8-tetrahydrofolate contacts are provided by residues leucine 121 and glycine 125–leucine 127. Lysine 230 is modified (N6-(pyridoxal phosphate)lysine). (6S)-5,6,7,8-tetrahydrofolate is bound at residue serine 355–phenylalanine 357.

Belongs to the SHMT family. In terms of assembly, homodimer. Requires pyridoxal 5'-phosphate as cofactor.

Its subcellular location is the cytoplasm. The catalysed reaction is (6R)-5,10-methylene-5,6,7,8-tetrahydrofolate + glycine + H2O = (6S)-5,6,7,8-tetrahydrofolate + L-serine. It participates in one-carbon metabolism; tetrahydrofolate interconversion. It functions in the pathway amino-acid biosynthesis; glycine biosynthesis; glycine from L-serine: step 1/1. Catalyzes the reversible interconversion of serine and glycine with tetrahydrofolate (THF) serving as the one-carbon carrier. This reaction serves as the major source of one-carbon groups required for the biosynthesis of purines, thymidylate, methionine, and other important biomolecules. Also exhibits THF-independent aldolase activity toward beta-hydroxyamino acids, producing glycine and aldehydes, via a retro-aldol mechanism. This Nitrosococcus oceani (strain ATCC 19707 / BCRC 17464 / JCM 30415 / NCIMB 11848 / C-107) protein is Serine hydroxymethyltransferase.